A 296-amino-acid chain; its full sequence is Nucleotide-binding protein Pnuc_1915 (296 aa).

ATP is bound at residue Gly-8–Ser-15. A GTP-binding site is contributed by Asp-57–Arg-60.

It belongs to the RapZ-like family.

Functionally, displays ATPase and GTPase activities. This is Nucleotide-binding protein Pnuc_1915 from Polynucleobacter asymbioticus (strain DSM 18221 / CIP 109841 / QLW-P1DMWA-1) (Polynucleobacter necessarius subsp. asymbioticus).